A 278-amino-acid chain; its full sequence is Diaminopimelate epimerase (278 aa).

3 residues coordinate substrate: Asn13, Gln46, and Asn66. Cys75 functions as the Proton donor in the catalytic mechanism. Substrate-binding positions include 76–77 (GN), Asn159, Asn192, and 210–211 (ER). Cys219 serves as the catalytic Proton acceptor. 220–221 (GT) is a substrate binding site.

The protein belongs to the diaminopimelate epimerase family. As to quaternary structure, homodimer.

The protein resides in the cytoplasm. It catalyses the reaction (2S,6S)-2,6-diaminopimelate = meso-2,6-diaminopimelate. It participates in amino-acid biosynthesis; L-lysine biosynthesis via DAP pathway; DL-2,6-diaminopimelate from LL-2,6-diaminopimelate: step 1/1. Functionally, catalyzes the stereoinversion of LL-2,6-diaminopimelate (L,L-DAP) to meso-diaminopimelate (meso-DAP), a precursor of L-lysine and an essential component of the bacterial peptidoglycan. This chain is Diaminopimelate epimerase, found in Laribacter hongkongensis (strain HLHK9).